Reading from the N-terminus, the 1436-residue chain is Antigen WC1.1 (1436 aa).

Residues 1–25 (MALGRHLSLRGLCVLLLGTMVGGQA) form the signal peptide. SRCR domains lie at 28 to 131 (LRLK…VVCS), 134 to 234 (VRLA…VVCS), and 239 to 340 (VRLM…VICS). 2 disulfide bridges follow: Cys-66/Cys-130 and Cys-97/Cys-107. An N-linked (GlcNAc...) asparagine glycan is attached at Asn-162. Disulfide bonds link Cys-172–Cys-233 and Cys-203–Cys-213. N-linked (GlcNAc...) asparagine glycans are attached at residues Asn-244 and Asn-256. Intrachain disulfides connect Cys-265–Cys-329, Cys-278–Cys-339, and Cys-309–Cys-319. Asn-351, Asn-424, and Asn-444 each carry an N-linked (GlcNAc...) asparagine glycan. SRCR domains follow at residues 376 to 476 (LRLV…VICS), 481 to 581 (LRMV…IWCA), 586 to 686 (IRLV…VICS), 689 to 789 (VRLA…VVCS), and 794 to 895 (VQLM…VICS). Intrachain disulfides connect Cys-401/Cys-465, Cys-414/Cys-475, and Cys-445/Cys-455. N-linked (GlcNAc...) asparagine glycosylation is found at Asn-499 and Asn-531. Cystine bridges form between Cys-506-Cys-570, Cys-519-Cys-580, Cys-550-Cys-560, Cys-611-Cys-675, Cys-624-Cys-685, and Cys-655-Cys-665. Residue Asn-717 is glycosylated (N-linked (GlcNAc...) asparagine). 2 disulfides stabilise this stretch: Cys-727-Cys-788 and Cys-758-Cys-768. Asn-799 carries an N-linked (GlcNAc...) asparagine glycan. Intrachain disulfides connect Cys-820/Cys-884, Cys-833/Cys-894, and Cys-864/Cys-874. Residues Asn-897, Asn-979, and Asn-999 are each glycosylated (N-linked (GlcNAc...) asparagine). SRCR domains lie at 931–1031 (LRLV…VICS), 1036–1136 (LRMV…ISCE), and 1155–1255 (LRLR…VRCS). 3 cysteine pairs are disulfide-bonded: Cys-956-Cys-1020, Cys-969-Cys-1030, and Cys-1000-Cys-1010. 2 N-linked (GlcNAc...) asparagine glycosylation sites follow: Asn-1054 and Asn-1086. 3 cysteine pairs are disulfide-bonded: Cys-1061–Cys-1125, Cys-1074–Cys-1135, and Cys-1105–Cys-1115. 2 N-linked (GlcNAc...) asparagine glycosylation sites follow: Asn-1173 and Asn-1214. Intrachain disulfides connect Cys-1180–Cys-1244, Cys-1193–Cys-1254, and Cys-1224–Cys-1234. The tract at residues 1337–1410 (EGLGSPDQMT…PGEGEESFWL (74 aa)) is disordered. Over residues 1348–1358 (VPDENYDDAEE) the composition is skewed to acidic residues. Residues 1384 to 1393 (RSSQTGSFLN) show a composition bias toward polar residues. Asn-1393 carries an N-linked (GlcNAc...) asparagine glycan.

Expressed on subsets of CD4-CD8- gamma delta T lymphocytes.

Its subcellular location is the secreted. The chain is Antigen WC1.1 from Bos taurus (Bovine).